The sequence spans 123 residues: Small ribosomal subunit protein uS12c (123 aa).

Residues 1-16 (MPTIQQLIRNSRQPAE) show a composition bias toward polar residues. The tract at residues 1–23 (MPTIQQLIRNSRQPAENRTKSPA) is disordered.

Belongs to the universal ribosomal protein uS12 family. As to quaternary structure, part of the 30S ribosomal subunit.

It is found in the plastid. The protein resides in the chloroplast. Functionally, with S4 and S5 plays an important role in translational accuracy. Located at the interface of the 30S and 50S subunits. The polypeptide is Small ribosomal subunit protein uS12c (rps12) (Staurastrum punctulatum (Green alga)).